Here is a 911-residue protein sequence, read N- to C-terminus: FIGNL1-interacting regulator of recombination and mitosis (911 aa).

Positions 830–853 are disordered; that stretch reads SEKSQPAQTPLTEEPCAKRARQET. Over residues 844-853 the composition is skewed to basic and acidic residues; the sequence is PCAKRARQET.

Its subcellular location is the chromosome. The protein localises to the centromere. The protein resides in the kinetochore. It localises to the nucleus. It is found in the midbody. Its subcellular location is the cytoplasm. The protein localises to the cytoskeleton. The protein resides in the spindle. May play a role in chromosome segregation. The sequence is that of FIGNL1-interacting regulator of recombination and mitosis from Danio rerio (Zebrafish).